Consider the following 248-residue polypeptide: Pulmonary surfactant-associated protein A (248 aa).

A signal peptide spans 1–20; it reads MSLCSLAFTLFLTVVAGIKC. Residues 28-100 enclose the Collagen-like domain; the sequence is GSPGIPGAPG…PGERGLPGFP (73 aa). 4-hydroxyproline occurs at positions 30, 33, 36, 42, 54, 57, 63, 67, 70, and 76. A disordered region spans residues 31–99; sequence GIPGAPGNHG…EPGERGLPGF (69 aa). The segment covering 42 to 51 has biased composition (basic and acidic residues); it reads PGRDGRDGVK. Positions 54–65 are enriched in pro residues; it reads PGPPGPMGPPGG. The segment covering 69 to 82 has biased composition (low complexity); the sequence is LPGRDGLPGAPGAP. The segment covering 84 to 93 has biased composition (basic and acidic residues); sequence ERGDKGEPGE. The C-type lectin domain occupies 133–248; sequence SVGDKVFSTN…LQYRLAVCEF (116 aa). 2 disulfides stabilise this stretch: C155–C246 and C224–C238. The N-linked (GlcNAc...) asparagine glycan is linked to N207. Ca(2+) is bound by residues E215, R217, N234, and D235.

This sequence belongs to the SFTPA family. As to quaternary structure, oligomeric complex of 6 set of homotrimers.

Its subcellular location is the secreted. The protein localises to the extracellular space. The protein resides in the extracellular matrix. It localises to the surface film. In terms of biological role, in presence of calcium ions, it binds to surfactant phospholipids and contributes to lower the surface tension at the air-liquid interface in the alveoli of the mammalian lung and is essential for normal respiration. Enhances the expression of MYO18A/SP-R210 on alveolar macrophages. This chain is Pulmonary surfactant-associated protein A (Sftpa1), found in Rattus norvegicus (Rat).